Reading from the N-terminus, the 430-residue chain is tRNA-2-methylthio-N(6)-dimethylallyladenosine synthase (430 aa).

Residues 1 to 110 (MKVHIFTYGC…VPDAVLNAKN (110 aa)) enclose the MTTase N-terminal domain. [4Fe-4S] cluster contacts are provided by Cys-10, Cys-46, Cys-75, Cys-146, Cys-150, and Cys-153. The region spanning 132–363 (RSSNHHAWVT…LNLQKTINKE (232 aa)) is the Radical SAM core domain. The TRAM domain maps to 366-427 (KSYLGKEVEV…AGPLYGEIKK (62 aa)).

Belongs to the methylthiotransferase family. MiaB subfamily. In terms of assembly, monomer. [4Fe-4S] cluster serves as cofactor.

Its subcellular location is the cytoplasm. The enzyme catalyses N(6)-dimethylallyladenosine(37) in tRNA + (sulfur carrier)-SH + AH2 + 2 S-adenosyl-L-methionine = 2-methylsulfanyl-N(6)-dimethylallyladenosine(37) in tRNA + (sulfur carrier)-H + 5'-deoxyadenosine + L-methionine + A + S-adenosyl-L-homocysteine + 2 H(+). Catalyzes the methylthiolation of N6-(dimethylallyl)adenosine (i(6)A), leading to the formation of 2-methylthio-N6-(dimethylallyl)adenosine (ms(2)i(6)A) at position 37 in tRNAs that read codons beginning with uridine. This is tRNA-2-methylthio-N(6)-dimethylallyladenosine synthase from Fervidobacterium nodosum (strain ATCC 35602 / DSM 5306 / Rt17-B1).